Consider the following 248-residue polypeptide: 3-deoxy-manno-octulosonate cytidylyltransferase (248 aa).

This sequence belongs to the KdsB family.

The protein resides in the cytoplasm. The enzyme catalyses 3-deoxy-alpha-D-manno-oct-2-ulosonate + CTP = CMP-3-deoxy-beta-D-manno-octulosonate + diphosphate. The protein operates within nucleotide-sugar biosynthesis; CMP-3-deoxy-D-manno-octulosonate biosynthesis; CMP-3-deoxy-D-manno-octulosonate from 3-deoxy-D-manno-octulosonate and CTP: step 1/1. It functions in the pathway bacterial outer membrane biogenesis; lipopolysaccharide biosynthesis. Activates KDO (a required 8-carbon sugar) for incorporation into bacterial lipopolysaccharide in Gram-negative bacteria. In Salmonella enteritidis PT4 (strain P125109), this protein is 3-deoxy-manno-octulosonate cytidylyltransferase.